The sequence spans 591 residues: Cytidine monophosphate-N-acetylneuraminic acid hydroxylase (591 aa).

In terms of domain architecture, Rieske spans 12–110; it reads LEAEDVRNLK…AVLSETDGSL (99 aa). Residues cysteine 52, histidine 54, cysteine 73, and histidine 76 each contribute to the [2Fe-2S] cluster site.

The protein belongs to the CMP-Neu5Ac hydroxylase family. [2Fe-2S] cluster serves as cofactor.

It is found in the cytoplasm. It catalyses the reaction CMP-N-acetyl-beta-neuraminate + 2 Fe(II)-[cytochrome b5] + O2 + 2 H(+) = CMP-N-glycoloyl-beta-neuraminate + 2 Fe(III)-[cytochrome b5] + H2O. It participates in amino-sugar metabolism; N-acetylneuraminate metabolism. Its function is as follows. Sialic acids are components of carbohydrate chains of glycoconjugates and are involved in cell-cell recognition and cell-pathogen interactions. Catalyzes the conversion of CMP-N-acetylneuraminic acid (CMP-Neu5Ac) into its hydroxylated derivative CMP-N-glycolylneuraminic acid (CMP-Neu5Gc), a sialic acid abundantly expressed at the surface of many cells. The polypeptide is Cytidine monophosphate-N-acetylneuraminic acid hydroxylase (cmah) (Danio rerio (Zebrafish)).